Consider the following 486-residue polypeptide: UDP-GalNAc:beta-1,3-N-acetylgalactosaminyltransferase 2 (486 aa).

Over 1–10 (MRHLLFLCPC) the chain is Cytoplasmic. Residues 11–31 (VIGVAFHLWLFNFSGLFSWFL) form a helical; Signal-anchor for type II membrane protein membrane-spanning segment. Topologically, residues 32 to 486 (VWSPHSYDIV…CGNPCACEDR (455 aa)) are lumenal. 2 N-linked (GlcNAc...) asparagine glycosylation sites follow: Asn103 and Asn160.

Belongs to the glycosyltransferase 31 family.

Its subcellular location is the golgi apparatus membrane. It localises to the endoplasmic reticulum. It carries out the reaction 3-O-(N-acetyl-beta-D-glucosaminyl-(1-&gt;4)-alpha-D-mannosyl)-L-threonyl-[protein] + UDP-N-acetyl-alpha-D-galactosamine = 3-O-[beta-D-GalNAc-(1-&gt;3)-beta-D-GlcNAc-(1-&gt;4)-alpha-D-Man]-L-Thr-[protein] + UDP + H(+). It functions in the pathway protein modification; protein glycosylation. Its function is as follows. Beta-1,3-N-acetylgalactosaminyltransferase that synthesizes a unique carbohydrate structure, GalNAc-beta-1-3GlcNAc, on N- and O-glycans. Has no galactose nor galactosaminyl transferase activity toward any acceptor substrate. Involved in alpha-dystroglycan (dag1) glycosylation. This chain is UDP-GalNAc:beta-1,3-N-acetylgalactosaminyltransferase 2 (b3galnt2), found in Xenopus laevis (African clawed frog).